Here is a 253-residue protein sequence, read N- to C-terminus: Imidazole glycerol phosphate synthase subunit HisF (253 aa).

Residues aspartate 11 and aspartate 130 contribute to the active site.

The protein belongs to the HisA/HisF family. In terms of assembly, heterodimer of HisH and HisF.

Its subcellular location is the cytoplasm. It carries out the reaction 5-[(5-phospho-1-deoxy-D-ribulos-1-ylimino)methylamino]-1-(5-phospho-beta-D-ribosyl)imidazole-4-carboxamide + L-glutamine = D-erythro-1-(imidazol-4-yl)glycerol 3-phosphate + 5-amino-1-(5-phospho-beta-D-ribosyl)imidazole-4-carboxamide + L-glutamate + H(+). The protein operates within amino-acid biosynthesis; L-histidine biosynthesis; L-histidine from 5-phospho-alpha-D-ribose 1-diphosphate: step 5/9. IGPS catalyzes the conversion of PRFAR and glutamine to IGP, AICAR and glutamate. The HisF subunit catalyzes the cyclization activity that produces IGP and AICAR from PRFAR using the ammonia provided by the HisH subunit. The chain is Imidazole glycerol phosphate synthase subunit HisF from Dehalococcoides mccartyi (strain ATCC BAA-2100 / JCM 16839 / KCTC 5957 / BAV1).